The following is a 327-amino-acid chain: Solute-binding protein SPO1773 (327 aa).

Residues 1–26 form the signal peptide; the sequence is MTISFKGLARGVACAALVLAALPAAA. 3-hydroxybenzoate is bound by residues 39–41, Arg150, 170–172, and Asp211; these read HTW and RIT.

This sequence belongs to the bacterial solute-binding protein 7 family. In terms of assembly, the complex is comprised of an extracytoplasmic solute-binding protein and a heteromeric permease formed by two transmembrane proteins.

It localises to the periplasm. Solute-binding protein that binds 3,4-dihydroxybenzoate and 3-hydroxybenzoate (in vitro). Probably part of a tripartite ATP-independent periplasmic (TRAP) transport system that mediates solute transport into the cytoplasm. The sequence is that of Solute-binding protein SPO1773 from Ruegeria pomeroyi (strain ATCC 700808 / DSM 15171 / DSS-3) (Silicibacter pomeroyi).